The following is a 466-amino-acid chain: Delta-1 crystallin (466 aa).

Belongs to the lyase 1 family. Argininosuccinate lyase subfamily. As to quaternary structure, homotetramer. As to expression, eye lens.

Delta crystallin, the principal crystallin in embryonic lens, is found only in birds and reptiles. Despite possessing the necessary catalytic residues, this protein does not function as an enzymatically active argininosuccinate lyase. The protein is Delta-1 crystallin (ASL1) of Anas platyrhynchos (Mallard).